The chain runs to 236 residues: MKLLGHRKSHGHQRADASPDAGSKDGCRPDSGRTSGSDTSRGSQTTGPKGRPTPKRNQSRRHTKKGPVAPAPMTAAQARARRKSLAGPKLSREERRAEKAANRARMTERRERMMAGEEAYLLPRDRGPVRRYVRDVVDSRRNLLGLFMPSALTLLFVMFAVPQVQFYLSPAMLILLALMTIDAIILGRKVGRLVDTKFPSNTESRWRLGLYAAGRASQIRRLRAPRPQVERGGDVG.

Residues 1–12 are compositionally biased toward basic residues; that stretch reads MKLLGHRKSHGH. A disordered region spans residues 1-108; sequence MKLLGHRKSH…KAANRARMTE (108 aa). Residues 13-31 show a composition bias toward basic and acidic residues; the sequence is QRADASPDAGSKDGCRPDS. Low complexity predominate over residues 32-47; the sequence is GRTSGSDTSRGSQTTG. Over residues 52 to 65 the composition is skewed to basic residues; sequence PTPKRNQSRRHTKK. Positions 67–78 are enriched in low complexity; sequence PVAPAPMTAAQA. Basic and acidic residues predominate over residues 90–108; that stretch reads LSREERRAEKAANRARMTE. The next 2 helical transmembrane spans lie at 142 to 162 and 166 to 186; these read NLLG…FAVP and FYLS…AIIL.

It localises to the cell membrane. This is an uncharacterized protein from Mycobacterium tuberculosis (strain CDC 1551 / Oshkosh).